A 241-amino-acid polypeptide reads, in one-letter code: Phosphoribosylaminoimidazole-succinocarboxamide synthase (241 aa).

The protein belongs to the SAICAR synthetase family.

It catalyses the reaction 5-amino-1-(5-phospho-D-ribosyl)imidazole-4-carboxylate + L-aspartate + ATP = (2S)-2-[5-amino-1-(5-phospho-beta-D-ribosyl)imidazole-4-carboxamido]succinate + ADP + phosphate + 2 H(+). It participates in purine metabolism; IMP biosynthesis via de novo pathway; 5-amino-1-(5-phospho-D-ribosyl)imidazole-4-carboxamide from 5-amino-1-(5-phospho-D-ribosyl)imidazole-4-carboxylate: step 1/2. The protein is Phosphoribosylaminoimidazole-succinocarboxamide synthase of Caldivirga maquilingensis (strain ATCC 700844 / DSM 13496 / JCM 10307 / IC-167).